Consider the following 71-residue polypeptide: Antimicrobial peptide VpCT4 (71 aa).

Positions 1-23 (MKTQFVILIVAIVILQLISQSEA) are cleaved as a signal peptide. L39 bears the Leucine amide mark. Positions 40–71 (GKRGVQNMDQFDDIFEPELSEADLRYLQDLLR) are excised as a propeptide.

It belongs to the non-disulfide-bridged peptide (NDBP) superfamily. Short antimicrobial peptide (group 4) family. As to expression, expressed by the venom gland.

The protein localises to the secreted. It localises to the target cell membrane. In terms of biological role, antimicrobial peptide with potent activity against bacteria S.aureus (MIC=9.3 uM), weak activity against E.coli (MIC&gt;100 uM), and weak activity against pathogenic yeasts C.albicans (MIC=100 uM) and C.glabrata (MIC=100 uM). Is not very effective against P.aeruginosa (MIC&gt;300 uM). Also provokes high hemolysis on human erythrocytes (HC(50)=4.8 uM). This is Antimicrobial peptide VpCT4 from Mesomexovis punctatus (Scorpion).